Reading from the N-terminus, the 597-residue chain is Aspartate--tRNA(Asp/Asn) ligase (597 aa).

Glutamate 175 serves as a coordination point for L-aspartate. The aspartate stretch occupies residues 199–202 (QQYK). Residues arginine 221 and histidine 454 each contribute to the L-aspartate site. 221-223 (RDE) contributes to the ATP binding site. ATP is bound at residue glutamate 488. L-aspartate is bound at residue arginine 495. Residue 540-543 (GVDR) participates in ATP binding.

The protein belongs to the class-II aminoacyl-tRNA synthetase family. Type 1 subfamily. In terms of assembly, homodimer.

It is found in the cytoplasm. The enzyme catalyses tRNA(Asx) + L-aspartate + ATP = L-aspartyl-tRNA(Asx) + AMP + diphosphate. Aspartyl-tRNA synthetase with relaxed tRNA specificity since it is able to aspartylate not only its cognate tRNA(Asp) but also tRNA(Asn). Reaction proceeds in two steps: L-aspartate is first activated by ATP to form Asp-AMP and then transferred to the acceptor end of tRNA(Asp/Asn). The chain is Aspartate--tRNA(Asp/Asn) ligase from Bartonella quintana (strain Toulouse) (Rochalimaea quintana).